We begin with the raw amino-acid sequence, 106 residues long: Small ribosomal subunit protein uS10 (106 aa).

The protein belongs to the universal ribosomal protein uS10 family. Part of the 30S ribosomal subunit.

In terms of biological role, involved in the binding of tRNA to the ribosomes. This is Small ribosomal subunit protein uS10 from Pyrobaculum calidifontis (strain DSM 21063 / JCM 11548 / VA1).